The chain runs to 230 residues: Thymidylate synthase 1 (230 aa).

92 to 93 (RR) is a dUMP binding site. Cysteine 112 acts as the Nucleophile in catalysis. DUMP contacts are provided by residues 132–135 (RSND), asparagine 143, and 173–175 (HVY). Aspartate 135 provides a ligand contact to (6R)-5,10-methylene-5,6,7,8-tetrahydrofolate.

The protein belongs to the thymidylate synthase family. Bacterial-type ThyA subfamily. Homodimer.

The protein resides in the cytoplasm. The enzyme catalyses dUMP + (6R)-5,10-methylene-5,6,7,8-tetrahydrofolate = 7,8-dihydrofolate + dTMP. The protein operates within pyrimidine metabolism; dTTP biosynthesis. Functionally, catalyzes the reductive methylation of 2'-deoxyuridine-5'-monophosphate (dUMP) to 2'-deoxythymidine-5'-monophosphate (dTMP) while utilizing 5,10-methylenetetrahydrofolate (mTHF) as the methyl donor and reductant in the reaction, yielding dihydrofolate (DHF) as a by-product. This enzymatic reaction provides an intracellular de novo source of dTMP, an essential precursor for DNA biosynthesis. This chain is Thymidylate synthase 1, found in Bacillus amyloliquefaciens (Bacillus velezensis).